An 80-amino-acid polypeptide reads, in one-letter code: U-actitoxin-Avd9a (80 aa).

A signal peptide spans 1–20 (MNLKVLAVFVLCAILVVVTA). A propeptide spanning residues 21–39 (ERRGTETGVYKKDTLQDLI) is cleaved from the precursor. Residues 45–80 (CIDRFPTGTCKQVKKGGSCKNSDKYRMNCRKTCGLC) form the ShKT domain. 3 cysteine pairs are disulfide-bonded: cysteine 45/cysteine 80, cysteine 54/cysteine 73, and cysteine 63/cysteine 77. The segment at 68-69 (KY) is crucial for binding to potassium channels.

The protein belongs to the sea anemone type 1 potassium channel toxin family. Type 1b subfamily.

It is found in the secreted. The protein localises to the nematocyst. In terms of biological role, inhibits voltage-gated potassium channels (Kv1/KCNA). The chain is U-actitoxin-Avd9a from Anemonia viridis (Snakelocks anemone).